The primary structure comprises 104 residues: uncharacterized protein (104 aa).

Residues 1–24 form a disordered region; the sequence is MISTEKSSDAVAMHCPSGDQHNSE.

This is an uncharacterized protein from Saccharomyces cerevisiae (strain ATCC 204508 / S288c) (Baker's yeast).